Consider the following 302-residue polypeptide: Cyclopropane mycolic acid synthase 2 (302 aa).

S-adenosyl-L-methionine contacts are provided by residues 41-42, 76-84, 102-107, and 131-132; these read YS, LLDIGCGWG, TLSENQ, and WE. C284 is a catalytic residue.

This sequence belongs to the CFA/CMAS family. As to quaternary structure, homodimer.

The protein resides in the cytoplasm. The enzyme catalyses a 1-acyl-2-(9Z)-enoyl-sn-glycero-3-phospholipid + S-adenosyl-L-methionine = a 1-acyl-2-(9-cyclopronane)-acyl-sn-glycero-3-phospholipid + S-adenosyl-L-homocysteine + H(+). It functions in the pathway lipid metabolism; mycolic acid biosynthesis. Catalyzes the formation of trans cyclopropanated ketomycolate or methoxymycolate through the conversion of a double bond to a cyclopropane ring at the proximal position of an oxygenated mycolic acid via the transfer of a methylene group from S-adenosyl-L-methionine. In the absence of MmaA2, CmaA2 has a non-specific cis-cyclopropanating activity and is able to catalyze the conversion of a double bond to a cis cyclopropane ring at the distal position of an alpha mycolic acid. Cyclopropanated mycolic acids are key factors participating in cell envelope permeability, host immunomodulation and persistence. In Mycobacterium bovis (strain ATCC BAA-935 / AF2122/97), this protein is Cyclopropane mycolic acid synthase 2 (cmaA2).